Consider the following 318-residue polypeptide: Strigolactone esterase D14 (318 aa).

The segment covering 1 to 11 (MLRSTHPPPSS) has biased composition (pro residues). The interval 1-48 (MLRSTHPPPSSPSSSSSGGGGGGGSSASSSSEKTMVGGGGGGGGGSGS) is disordered. Residues 36 to 47 (VGGGGGGGGGSG) show a composition bias toward gly residues. Ser147 (nucleophile) is an active-site residue. Positions 147 and 241 each coordinate substrate. Active-site residues include Asp268 and His297. A substrate-binding site is contributed by His297.

The protein belongs to the AB hydrolase superfamily. As to quaternary structure, interacts with D53. The interaction between D53 and D14 is enhanced in the presence of strigolactones. The interaction with D53 occurs in the presence of (2'R) stereoisomers of strigolactones, but not (2'S) stereoisomers. Interacts with SLR1 in a strigolactone-dependent manner. Interacts with D3 in a strigolactone-dependent manner. In terms of tissue distribution, expressed in the parenchyma cells of the root stele and lateral roots, vascular tissues of vein and leaf sheath, ligule base, auricle base and stem base.

Its subcellular location is the cytoplasm. It is found in the nucleus. Functionally, involved in strigolactone (SL) signaling pathway. May function downstream of SL synthesis, as a component of hormone signaling or as an enzyme that participates in the conversion of SL to the bioactive form. Strigolactones are hormones that inhibit tillering and shoot branching through the MAX-dependent pathway, contribute to the regulation of shoot architectural response to phosphate-limiting conditions and function as rhizosphere signal that stimulates hyphal branching of arbuscular mycorrhizal fungi and trigger seed germination of root parasitic weeds. Strigolactone-dependent association of D14 with D3 and D53 (a repressor of SL signaling) triggers D53 ubiquitination and degradation. Hydrolyzes the butenolide ring of SLs. A reaction product D-OH is trapped in the cavity of D14, inducing the interaction with SLR1, and probably with other proteins such as D3 and D53. Contributes to the negative regulation of gibberellin signaling. This Oryza sativa subsp. japonica (Rice) protein is Strigolactone esterase D14.